The chain runs to 349 residues: Cobalt-precorrin-5B C(1)-methyltransferase (349 aa).

The protein belongs to the CbiD family.

It catalyses the reaction Co-precorrin-5B + S-adenosyl-L-methionine = Co-precorrin-6A + S-adenosyl-L-homocysteine. It functions in the pathway cofactor biosynthesis; adenosylcobalamin biosynthesis; cob(II)yrinate a,c-diamide from sirohydrochlorin (anaerobic route): step 6/10. Catalyzes the methylation of C-1 in cobalt-precorrin-5B to form cobalt-precorrin-6A. This Saccharolobus solfataricus (strain ATCC 35092 / DSM 1617 / JCM 11322 / P2) (Sulfolobus solfataricus) protein is Cobalt-precorrin-5B C(1)-methyltransferase.